The following is an 81-amino-acid chain: High-potential iron-sulfur protein (81 aa).

4 residues coordinate [4Fe-4S] cluster: Cys43, Cys46, Cys59, and Cys73.

This sequence belongs to the high-potential iron-sulfur protein (HiPIP) family. Homodimer.

The protein resides in the periplasm. In terms of biological role, specific class of high-redox-potential 4Fe-4S ferredoxins. Functions in anaerobic electron transport in most purple and in some other photosynthetic bacteria and in at least one genus (Paracoccus) of halophilic, denitrifying bacteria. The sequence is that of High-potential iron-sulfur protein from Halochromatium salexigens (Chromatium salexigens).